We begin with the raw amino-acid sequence, 106 residues long: uncharacterized protein (106 aa).

This is an uncharacterized protein from Thermoproteus tenax virus 1 (strain KRA1) (TTV1).